The following is a 504-amino-acid chain: Protein DETOXIFICATION 38 (504 aa).

12 helical membrane passes run 56 to 76 (LLLR…GMGI), 90 to 110 (LAAA…MLGM), 139 to 159 (IVLA…YPIL), 170 to 190 (YMGS…AVYF), 208 to 228 (ISAA…YAMG), 234 to 254 (IAYV…FYVI), 273 to 295 (GLWS…LWYT), 316 to 336 (SICM…NAAV), 356 to 376 (TWTA…VVIA), 401 to 421 (FLAV…VAVG), 433 to 453 (IGCY…TFNF), and 457 to 477 (GIWT…LYVT).

The protein belongs to the multi antimicrobial extrusion (MATE) (TC 2.A.66.1) family.

The protein resides in the membrane. This is Protein DETOXIFICATION 38 from Arabidopsis thaliana (Mouse-ear cress).